Here is a 55-residue protein sequence, read N- to C-terminus: Large ribosomal subunit protein bL33 (55 aa).

Residues Met-1 to Leu-11 are compositionally biased toward basic and acidic residues. Residues Met-1–Thr-24 are disordered. Polar residues predominate over residues Thr-14–Thr-24.

This sequence belongs to the bacterial ribosomal protein bL33 family.

The chain is Large ribosomal subunit protein bL33 from Burkholderia multivorans (strain ATCC 17616 / 249).